The sequence spans 189 residues: UPF0301 protein PputW619_0469 (189 aa).

This sequence belongs to the UPF0301 (AlgH) family.

The sequence is that of UPF0301 protein PputW619_0469 from Pseudomonas putida (strain W619).